A 283-amino-acid chain; its full sequence is MSDRIAVLPQYLLPKQALTSFAGRMASARAGQLTTAVIRRFVARYGVDMSEAANPDIASYATFNDFFTRALRPGLRPLADAAVVCPVDGAVSQIGPIEQDQIFQAKGHLYSTAALLGGDAEMAAQFQDGSFATIYLSPRDYHRIHMPCDGRLVRMDHVPGALFSVNPTTARGVPGLFARNERVVCLFETPLGPMALVLVGATIVGSMATVWHGQVNPPRTGQPRRWDYGDREVVLRQGDEMGRFLLGSTVVLLFPRGAVQFMPGWEAARPVRLGEAMAHRCGI.

Active-site charge relay system; for autoendoproteolytic cleavage activity residues include D88, H145, and S248. Catalysis depends on S248, which acts as the Schiff-base intermediate with substrate; via pyruvic acid; for decarboxylase activity. The residue at position 248 (S248) is a Pyruvic acid (Ser); by autocatalysis.

Belongs to the phosphatidylserine decarboxylase family. PSD-B subfamily. Prokaryotic type I sub-subfamily. Heterodimer of a large membrane-associated beta subunit and a small pyruvoyl-containing alpha subunit. The cofactor is pyruvate. In terms of processing, is synthesized initially as an inactive proenzyme. Formation of the active enzyme involves a self-maturation process in which the active site pyruvoyl group is generated from an internal serine residue via an autocatalytic post-translational modification. Two non-identical subunits are generated from the proenzyme in this reaction, and the pyruvate is formed at the N-terminus of the alpha chain, which is derived from the carboxyl end of the proenzyme. The autoendoproteolytic cleavage occurs by a canonical serine protease mechanism, in which the side chain hydroxyl group of the serine supplies its oxygen atom to form the C-terminus of the beta chain, while the remainder of the serine residue undergoes an oxidative deamination to produce ammonia and the pyruvoyl prosthetic group on the alpha chain. During this reaction, the Ser that is part of the protease active site of the proenzyme becomes the pyruvoyl prosthetic group, which constitutes an essential element of the active site of the mature decarboxylase.

The protein resides in the cell membrane. It catalyses the reaction a 1,2-diacyl-sn-glycero-3-phospho-L-serine + H(+) = a 1,2-diacyl-sn-glycero-3-phosphoethanolamine + CO2. The protein operates within phospholipid metabolism; phosphatidylethanolamine biosynthesis; phosphatidylethanolamine from CDP-diacylglycerol: step 2/2. Catalyzes the formation of phosphatidylethanolamine (PtdEtn) from phosphatidylserine (PtdSer). The sequence is that of Phosphatidylserine decarboxylase proenzyme from Acidovorax ebreus (strain TPSY) (Diaphorobacter sp. (strain TPSY)).